Consider the following 456-residue polypeptide: Chitin synthase regulatory factor 1 (456 aa).

Disordered stretches follow at residues 1-20 (MPAS…ALLV), 38-74 (ESPL…SLSS), and 139-158 (SKPS…SGSE). The segment covering 140–158 (KPSLSSNSSDSSFSKSGSE) has biased composition (low complexity). A phosphoserine mark is found at S227 and S230. Sel1-like repeat units lie at residues 293 to 327 (NFVP…SLGH), 328 to 364 (DRSS…DKGN), 365 to 402 (ADAM…MLGH), and 403 to 438 (APAC…INDS).

Its function is as follows. Involved in chitin biosynthesis. The protein is Chitin synthase regulatory factor 1 (chr1) of Schizosaccharomyces pombe (strain 972 / ATCC 24843) (Fission yeast).